The sequence spans 198 residues: MNLLMGYTYLIPILFASYLIGSIPFSWILVKVFYKRDLRSVGSGNIGATNAFRVNRGISFLVLLLDIFKSVLVILILEKMCAHKSIMYLTGFTVVLGHIFPVWFLFKGGKGIAPTIGVVLSINIKIFFLFIITWAVVFMIFRYSSLSSIISIISSCIYCAVTENFNSSIFYIAMSIIVLIKHRDNVIRMINGTEKKLF.

5 helical membrane-spanning segments follow: residues 10–30 (LIPI…WILV), 57–77 (GISF…ILIL), 86–106 (IMYL…WFLF), 118–138 (VVLS…AVVF), and 160–180 (AVTE…IVLI).

This sequence belongs to the PlsY family. In terms of assembly, probably interacts with PlsX.

Its subcellular location is the cell inner membrane. It carries out the reaction an acyl phosphate + sn-glycerol 3-phosphate = a 1-acyl-sn-glycero-3-phosphate + phosphate. Its pathway is lipid metabolism; phospholipid metabolism. In terms of biological role, catalyzes the transfer of an acyl group from acyl-phosphate (acyl-PO(4)) to glycerol-3-phosphate (G3P) to form lysophosphatidic acid (LPA). This enzyme utilizes acyl-phosphate as fatty acyl donor, but not acyl-CoA or acyl-ACP. This chain is Glycerol-3-phosphate acyltransferase, found in Anaplasma marginale (strain Florida).